A 337-amino-acid polypeptide reads, in one-letter code: Diacylglycerol O-acyltransferase 2-like protein 6 (337 aa).

The next 2 helical transmembrane spans lie at 22 to 42 (IPVYIFLGAIPILLIPYFLLF) and 102 to 122 (YIIANHPHGILSFGVFINFAT).

The protein belongs to the diacylglycerol acyltransferase family. As to expression, expressed in all tissues tested except pancreas.

It is found in the endoplasmic reticulum membrane. It carries out the reaction 1,2-di-(9Z-octadecenoyl)-sn-glycerol + (9Z)-octadecenoyl-CoA = 1,2,3-tri-(9Z-octadecenoyl)-glycerol + CoA. It catalyses the reaction 1-O-(9Z-octadecenyl)-glycerol + (9Z)-octadecenoyl-CoA = 1-O-(9Z-octadecyl)-3-(9Z-octadecenoyl)-glycerol + CoA. The enzyme catalyses 1-(9Z-octadecenoyl)-glycerol + (9Z)-octadecenoyl-CoA = 1,2-di-(9Z-octadecenoyl)-glycerol + CoA. Diglyceride acyltransferase that uses fatty acyl-CoA as substrate. Particularly active with oleate as a substrate. Has no wax synthase activity to produce wax esters. Able to use 1-monoalkylglycerol (1-MAkG) as an acyl acceptor for the synthesis of monoalkyl-monoacylglycerol (MAMAG). In Homo sapiens (Human), this protein is Diacylglycerol O-acyltransferase 2-like protein 6.